The sequence spans 124 residues: Small ribosomal subunit protein uS12cz/uS12cy (124 aa).

This sequence belongs to the universal ribosomal protein uS12 family. In terms of assembly, part of the 30S ribosomal subunit.

It localises to the plastid. The protein localises to the chloroplast. Functionally, with S4 and S5 plays an important role in translational accuracy. Located at the interface of the 30S and 50S subunits. The protein is Small ribosomal subunit protein uS12cz/uS12cy (rps12-A) of Zea mays (Maize).